Reading from the N-terminus, the 388-residue chain is LL-diaminopimelate aminotransferase (388 aa).

Residues Tyr13, Gly38, Lys102, Tyr126, and Asn176 each coordinate substrate. Pyridoxal 5'-phosphate is bound by residues 101–102 (SK), Tyr126, Asn176, Tyr207, and 235–237 (SLS). Lys238 carries the post-translational modification N6-(pyridoxal phosphate)lysine. Arg246 provides a ligand contact to pyridoxal 5'-phosphate. Arg364 provides a ligand contact to substrate.

This sequence belongs to the class-I pyridoxal-phosphate-dependent aminotransferase family. LL-diaminopimelate aminotransferase subfamily. Homodimer. Requires pyridoxal 5'-phosphate as cofactor.

The catalysed reaction is (2S,6S)-2,6-diaminopimelate + 2-oxoglutarate = (S)-2,3,4,5-tetrahydrodipicolinate + L-glutamate + H2O + H(+). It participates in amino-acid biosynthesis; L-lysine biosynthesis via DAP pathway; LL-2,6-diaminopimelate from (S)-tetrahydrodipicolinate (aminotransferase route): step 1/1. In terms of biological role, involved in the synthesis of meso-diaminopimelate (m-DAP or DL-DAP), required for both lysine and peptidoglycan biosynthesis. Catalyzes the direct conversion of tetrahydrodipicolinate to LL-diaminopimelate. The protein is LL-diaminopimelate aminotransferase of Dehalococcoides mccartyi (strain ATCC BAA-2100 / JCM 16839 / KCTC 5957 / BAV1).